The sequence spans 101 residues: Small ribosomal subunit protein uS14 (101 aa).

The protein belongs to the universal ribosomal protein uS14 family. Part of the 30S ribosomal subunit. Contacts proteins S3 and S10.

In terms of biological role, binds 16S rRNA, required for the assembly of 30S particles and may also be responsible for determining the conformation of the 16S rRNA at the A site. The polypeptide is Small ribosomal subunit protein uS14 (Wigglesworthia glossinidia brevipalpis).